A 98-amino-acid chain; its full sequence is DNA-binding protein Fis (98 aa).

The H-T-H motif DNA-binding region spans 74–93 (QTRAATMLGINRGTLRKKLK).

The protein belongs to the transcriptional regulatory Fis family. As to quaternary structure, homodimer.

Activates ribosomal RNA transcription. Plays a direct role in upstream activation of rRNA promoters. The protein is DNA-binding protein Fis of Glaesserella parasuis serovar 5 (strain SH0165) (Haemophilus parasuis).